A 205-amino-acid chain; its full sequence is FMN reductase (NADH) RutF (205 aa).

The segment at 171-205 (PRAPRSGSAPAEPARAARALGARPAEGPALALRSA) is disordered.

This sequence belongs to the non-flavoprotein flavin reductase family. RutF subfamily.

The enzyme catalyses FMNH2 + NAD(+) = FMN + NADH + 2 H(+). In terms of biological role, catalyzes the reduction of FMN to FMNH2 which is used to reduce pyrimidine by RutA via the Rut pathway. The polypeptide is FMN reductase (NADH) RutF (Methylorubrum extorquens (strain DSM 6343 / CIP 106787 / DM4) (Methylobacterium extorquens)).